A 323-amino-acid polypeptide reads, in one-letter code: Beta-ketoacyl-[acyl-carrier-protein] synthase III (323 aa).

Catalysis depends on residues Cys113 and His250. An ACP-binding region spans residues 251–255; the sequence is QANRR. Asn280 is a catalytic residue.

It belongs to the thiolase-like superfamily. FabH family. As to quaternary structure, homodimer.

It is found in the cytoplasm. The catalysed reaction is malonyl-[ACP] + acetyl-CoA + H(+) = 3-oxobutanoyl-[ACP] + CO2 + CoA. The protein operates within lipid metabolism; fatty acid biosynthesis. Functionally, catalyzes the condensation reaction of fatty acid synthesis by the addition to an acyl acceptor of two carbons from malonyl-ACP. Catalyzes the first condensation reaction which initiates fatty acid synthesis and may therefore play a role in governing the total rate of fatty acid production. Possesses both acetoacetyl-ACP synthase and acetyl transacylase activities. Its substrate specificity determines the biosynthesis of branched-chain and/or straight-chain of fatty acids. In Rhizobium johnstonii (strain DSM 114642 / LMG 32736 / 3841) (Rhizobium leguminosarum bv. viciae), this protein is Beta-ketoacyl-[acyl-carrier-protein] synthase III.